We begin with the raw amino-acid sequence, 176 residues long: Putative Ras-related protein RABA4e (176 aa).

Belongs to the small GTPase superfamily. Rab family.

This Arabidopsis thaliana (Mouse-ear cress) protein is Putative Ras-related protein RABA4e (RABA4E).